We begin with the raw amino-acid sequence, 476 residues long: Riboflavin transporter rft-2 (476 aa).

The helical transmembrane segment at 1 to 21 threads the bilayer; that stretch reads MGCSAATFILVALFGSSSWMG. At 22–41 the chain is on the cytoplasmic side; it reads TNSVWMQLPLLTSELPEQWN. The helical transmembrane segment at 42 to 62 threads the bilayer; it reads LPSYLAGVVQIACIVPLIYTI. At 63-75 the chain is on the extracellular side; sequence LHKGVKSFTIPTA. Residues 76–96 traverse the membrane as a helical segment; sequence PLIIALLSLACCCQLGLSFFW. Topologically, residues 97-113 are cytoplasmic; it reads SDYSEIFGAPRSWPLYS. A helical membrane pass occupies residues 114-134; the sequence is LLFGLAIVNAMSNVLFMPFMA. Over 135–140 the chain is Extracellular; it reads QFHPAY. A helical transmembrane segment spans residues 141 to 161; sequence LNAYFVGMGLSSLAPSLLSLA. At 162–185 the chain is on the cytoplasmic side; it reads QGTSMFKCDEKGVAERFPPNFSVS. Residues 186-206 form a helical membrane-spanning segment; it reads IFFFVIFSFTCVALFAFIALY. At 207–306 the chain is on the extracellular side; it reads RSGAHTHFAT…HPVDYITGVK (100 aa). Residues 215 to 249 are disordered; sequence ATPNKKEPNEGTPLKKDLNNTSSSRKGDDEDESPI. A compositionally biased stretch (basic and acidic residues) spans 218-232; it reads NKKEPNEGTPLKKDL. N-linked (GlcNAc...) asparagine glycosylation is present at Asn-233. The helical transmembrane segment at 307-327 threads the bilayer; the sequence is FTFLLFTTALVNAQMNGIITS. Residues 328 to 342 are Cytoplasmic-facing; it reads VQSYAALPYSQATYH. A helical transmembrane segment spans residues 343–363; sequence FAVTLSNVVSPLSSFLPFFIS. The Extracellular portion of the chain corresponds to 364-366; that stretch reads VRS. A helical membrane pass occupies residues 367-387; that stretch reads IPVLAILTACSTAMTAFIVYL. Residues 388–393 lie on the Cytoplasmic side of the membrane; the sequence is AALSPN. The chain crosses the membrane as a helical span at residues 394-414; it reads LIFNSVTIGSALSIGGSLIAA. Residues 415 to 437 lie on the Extracellular side of the membrane; that stretch reads GLHSYLRVVFASLLREGHQSESR. A helical transmembrane segment spans residues 438 to 458; the sequence is LFWCGVFIQIGSFIGSAVMFP. The Cytoplasmic portion of the chain corresponds to 459–476; that stretch reads LVNIAHLFTSAPQCKSIS.

The protein belongs to the riboflavin transporter family. As to expression, expressed in intestine and pharynx.

The protein resides in the cell membrane. The catalysed reaction is riboflavin(in) = riboflavin(out). Riboflavin transporter. The sequence is that of Riboflavin transporter rft-2 from Caenorhabditis elegans.